Here is a 294-residue protein sequence, read N- to C-terminus: Elongation factor Ts (294 aa).

The involved in Mg(2+) ion dislocation from EF-Tu stretch occupies residues threonine 80–valine 83.

The protein belongs to the EF-Ts family.

It localises to the cytoplasm. Associates with the EF-Tu.GDP complex and induces the exchange of GDP to GTP. It remains bound to the aminoacyl-tRNA.EF-Tu.GTP complex up to the GTP hydrolysis stage on the ribosome. The polypeptide is Elongation factor Ts (Listeria monocytogenes serovar 1/2a (strain ATCC BAA-679 / EGD-e)).